Here is a 501-residue protein sequence, read N- to C-terminus: Geissoschizine oxidase (501 aa).

A helical transmembrane segment spans residues Met-1–Val-21. A glycan (N-linked (GlcNAc...) asparagine) is linked at Asn-60. A heme-binding site is contributed by Cys-442.

The protein belongs to the cytochrome P450 family. Heme is required as a cofactor. As to expression, expressed in leaf epidermis. Also present in the leaf internal phloem-associated parenchyma (IPAP) inside the mesophyll.

The protein localises to the membrane. It catalyses the reaction (19E)-geissoschizine + reduced [NADPH--hemoprotein reductase] + O2 = akuammicine + formate + oxidized [NADPH--hemoprotein reductase] + H2O + H(+). The enzyme catalyses (19E)-geissoschizine + reduced [NADPH--hemoprotein reductase] + O2 = 3,17-didehydrostemmadenine + oxidized [NADPH--hemoprotein reductase] + 2 H2O. Its pathway is alkaloid biosynthesis. Its function is as follows. Component of the seco-iridoid and derivatives monoterpenoid indole alkaloids (MIAs, e.g. vincristine, quinine, and strychnine) biosynthesis pathway. Catalyzes the oxidation of 19E-geissoschizine to produce a short-lived MIA unstable intermediate which can be spontaneously converted into akuammicine or oxidized by Redox1 and Redox2 to produce stemmadenine and 16S/R-deshydroxymethylstemmadenine (16S/R-DHS). In Catharanthus roseus (Madagascar periwinkle), this protein is Geissoschizine oxidase.